A 99-amino-acid chain; its full sequence is MTELAQLQASAEQAAALLKAMSHPKRLLILCMLSGSPGTSAGELTRITGLSASATSQHLARMRDEGLIDSQRDAQRILYSIKNEAVNAIIATLKNVYCP.

Positions 7-99 constitute an HTH arsR-type domain; the sequence is LQASAEQAAA…IATLKNVYCP (93 aa). Residues 41–64 constitute a DNA-binding region (H-T-H motif); that stretch reads AGELTRITGLSASATSQHLARMRD.

Its activity is regulated as follows. In the presence of H(2)S, two cysteine residues form an intramolecular tetrasulfide bond, which attenuates the binding of YgaV to DNA. Both unmodified YgaV and sulfide-modified YgaV can probably function as either a repressor or an activator. Binds heme, which may influence the DNA-binding affinity. Its function is as follows. Transcriptional regulator that regulates large-scale gene expression in response to sulfide. May act as a global regulator responsible for redox homeostasis. It functions as both a repressor and an activator. In the absence of sulfide compounds, it negatively regulates many anaerobic respiratory genes, including formate, fumarate, lactate, nitrate and nitrite reductase genes. In the presence of hydrogen sulfide (H(2)S), YgaV activity is attenuated, leading to the expression of anaerobic respiratory and ROS scavenging genes, which contributes to redox homeostasis, reactive oxygen species (ROS) scavenging and antibiotic tolerance. It responds to H(2)O(2) scavenging and increases antibiotic tolerance under H(2)S-atmospheric conditions. It also negatively regulates its own expression by binding to the ygaVP promoter region. May also be involved in regulatory mechanisms that operate independently of sulfide. This chain is HTH-type transcriptional regulator YgaV (ygaV), found in Escherichia coli (strain K12).